The chain runs to 191 residues: Recombination protein RecR (191 aa).

Residues 56–71 (CQNCNFLQSNNICHFC) form a C4-type zinc finger. Positions 78–170 (KQLMIFETTS…KVTKLAQGLP (93 aa)) constitute a Toprim domain.

Belongs to the RecR family.

Its function is as follows. May play a role in DNA repair. It seems to be involved in an RecBC-independent recombinational process of DNA repair. It may act with RecF and RecO. The polypeptide is Recombination protein RecR (Mycoplasmopsis pulmonis (strain UAB CTIP) (Mycoplasma pulmonis)).